The following is a 197-amino-acid chain: Probable nicotinate-nucleotide adenylyltransferase (197 aa).

Belongs to the NadD family.

The enzyme catalyses nicotinate beta-D-ribonucleotide + ATP + H(+) = deamido-NAD(+) + diphosphate. It participates in cofactor biosynthesis; NAD(+) biosynthesis; deamido-NAD(+) from nicotinate D-ribonucleotide: step 1/1. In terms of biological role, catalyzes the reversible adenylation of nicotinate mononucleotide (NaMN) to nicotinic acid adenine dinucleotide (NaAD). The chain is Probable nicotinate-nucleotide adenylyltransferase from Thermosipho melanesiensis (strain DSM 12029 / CIP 104789 / BI429).